A 226-amino-acid polypeptide reads, in one-letter code: UPF0758 protein SGO_1229 (226 aa).

The MPN domain occupies 103–225 (RILSSQKLAK…YYSYREETDL (123 aa)). Residues H174, H176, and D187 each contribute to the Zn(2+) site. Positions 174-187 (HNHPSGATRPSRDD) match the JAMM motif motif.

Belongs to the UPF0758 family.

The sequence is that of UPF0758 protein SGO_1229 from Streptococcus gordonii (strain Challis / ATCC 35105 / BCRC 15272 / CH1 / DL1 / V288).